A 78-amino-acid polypeptide reads, in one-letter code: Conotoxin 1 (78 aa).

Residues 1-22 (MKLTCMMFVAVLFLTASVFITA) form the signal peptide. A propeptide spanning residues 23–51 (DDSRNGIENLPRMRRHEMKNPKASKLNKR) is cleaved from the precursor. Glutamine 52 carries the pyrrolidone carboxylic acid modification. Disulfide bonds link cysteine 53–cysteine 69, cysteine 60–cysteine 73, and cysteine 68–cysteine 77.

It belongs to the conotoxin O1 superfamily. In terms of tissue distribution, expressed by the venom duct.

It localises to the secreted. The polypeptide is Conotoxin 1 (Conus imperialis (Imperial cone)).